Consider the following 168-residue polypeptide: DAZ-associated protein 2 (168 aa).

Over residues 1 to 13 the composition is skewed to low complexity; it reads MNSKGQYPTQPTY. The interval 1–25 is disordered; it reads MNSKGQYPTQPTYPVQPPGNPVYPQ. The PPAY motif lies at 39–42; that stretch reads PPAY. Ser-77 is modified (phosphoserine).

As to quaternary structure, interacts with SOX6. Interacts with DAZ1 and DAZL. Interacts with IL17RB. May interact with FAM168B. Interacts with INCA1. Interacts with EIF4G1 and EIF4G2. Interacts (via PPAY motif) with NEDD4 (via WW domains). Interacts with transcription factor TCF4; the interaction results in localization of DAZAP2 to the nucleus. Interacts with transcription factors TCF7 and TCF7L1. Interacts with transcription factor LEF1. Interacts with serine/threonine-protein kinase HIPK2; the interaction results in phosphorylation of DAZAP2 which causes localization of DAZAP2 to the nucleus, reduces interaction of DAZAP2 with HIPK2 and prevents DAZAP2-dependent degradation of HIPK2. Interacts with ubiquitin ligase SIAH1; the interaction is decreased following phosphorylation of DAZAP2 by HIPK2. Interacts with TP53; the interaction is triggered by DNA damage. Post-translationally, ubiquitinated by SMURF2, leading to proteasomal degradation. Ubiquitinated by NEDD4, leading to proteasomal degradation. Following DNA damage, phosphorylated by HIPK2 which promotes DAZAP2 localization to the nucleus, reduces interaction of DAZAP2 with HIPK2 and SIAH1, and prevents DAZAP2-dependent ubiquitination of HIPK2 by E3 ubiquitin-protein ligase SIAH1 and subsequent HIPK2 proteasomal degradation.

It is found in the cytoplasm. The protein resides in the nucleus. The protein localises to the nucleus speckle. It localises to the nuclear body. Its subcellular location is the stress granule. Functionally, in unstressed cells, promotes SIAH1-mediated polyubiquitination and degradation of the serine/threonine-protein kinase HIPK2, probably by acting as a loading factor that potentiates complex formation between HIPK2 and ubiquitin ligase SIAH1. In response to DNA damage, localizes to the nucleus following phosphorylation by HIPK2 and modulates the expression of a subset of TP53/p53 target genes by binding to TP53 at target gene promoters. This limits the expression of a number of cell death-mediating TP53 target genes, reducing DNA damage-induced cell death. Enhances the binding of transcription factor TCF7L2/TCF4, a Wnt signaling pathway effector, to the promoters of target genes. Plays a role in stress granule formation. This chain is DAZ-associated protein 2, found in Bos taurus (Bovine).